A 595-amino-acid chain; its full sequence is Elongation factor 4 (595 aa).

One can recognise a tr-type G domain in the interval 2–184 (SHIRNFSIIA…RLVATIPAPT (183 aa)). Residues 14–19 (DHGKST) and 131–134 (NKMD) each bind GTP.

It belongs to the TRAFAC class translation factor GTPase superfamily. Classic translation factor GTPase family. LepA subfamily.

The protein resides in the cell inner membrane. The enzyme catalyses GTP + H2O = GDP + phosphate + H(+). In terms of biological role, required for accurate and efficient protein synthesis under certain stress conditions. May act as a fidelity factor of the translation reaction, by catalyzing a one-codon backward translocation of tRNAs on improperly translocated ribosomes. Back-translocation proceeds from a post-translocation (POST) complex to a pre-translocation (PRE) complex, thus giving elongation factor G a second chance to translocate the tRNAs correctly. Binds to ribosomes in a GTP-dependent manner. The protein is Elongation factor 4 of Pseudomonas savastanoi pv. phaseolicola (strain 1448A / Race 6) (Pseudomonas syringae pv. phaseolicola (strain 1448A / Race 6)).